A 500-amino-acid polypeptide reads, in one-letter code: Kynurenine 3-monooxygenase acdD (500 aa).

Residues V17 and 36 to 38 (ELR) contribute to the FAD site. N50 carries an N-linked (GlcNAc...) asparagine glycan. Position 58 (A58) interacts with FAD. L-kynurenine contacts are provided by R89 and Y106. FAD contacts are provided by R118 and L143. N163 carries N-linked (GlcNAc...) asparagine glycosylation. FAD-binding positions include D321 and 332-335 (QGLN). The L-kynurenine site is built by N392 and Y428. The helical transmembrane segment at 451-471 (LLLYGSISAIISSAAIVGVLA) threads the bilayer.

Belongs to the aromatic-ring hydroxylase family. KMO subfamily. FAD is required as a cofactor.

It localises to the mitochondrion outer membrane. The catalysed reaction is L-kynurenine + NADPH + O2 + H(+) = 3-hydroxy-L-kynurenine + NADP(+) + H2O. The protein operates within secondary metabolite biosynthesis. It functions in the pathway cofactor biosynthesis; NAD(+) biosynthesis; quinolinate from L-kynurenine: step 1/3. Indoleamine 2,3-dioxygenase; part of the gene cluster that mediates the biosynthesis of aspcandine, a pyrrolobenzazepine alkaloid. Initially, the indoleamine 2,3-dioxygenase acdA accepts L-tryptophan and performs the oxidative opening of the indole ring to yield N'-formyl-L-kynurenine, which undergoes the spontaneous deformylation reaction to provide L-kynurenine. The kynurenine 3-monooxygenase acdD then hydroxylates L-kynurenine to afford 3-hydroxy-L-kynurenine. 3-hydroxy-L-kynurenine is activated by the A domain of the NRPS-PKS acdB and subsequently loaded onto the enzyme. The KS domain conducts the decarboxylative condensation of the 3-hydroxy-L-kynurenyl and malonyl moieties, and subsequent nucleophilic attacks by the two amino groups would occur nonenzymatically at two distinct positions, achieving the chain release and the construction of the tricyclic system. Finally, the dehydration reaction completes the biosynthesis to yield aspcandine. This chain is Kynurenine 3-monooxygenase acdD, found in Aspergillus candidus.